The sequence spans 859 residues: Sulfate permease 1 (859 aa).

Asn-51 and Asn-93 each carry an N-linked (GlcNAc...) asparagine glycan. Transmembrane regions (helical) follow at residues Leu-94–Pro-114, Tyr-116–Val-136, Leu-148–Ala-168, Val-173–Leu-193, Pro-206–Leu-226, Leu-234–Gly-254, Phe-292–Ile-312, and Phe-332–Ser-352. Residues Asn-358 and Asn-391 are each glycosylated (N-linked (GlcNAc...) asparagine). The next 4 helical transmembrane spans lie at Glu-395–Gly-415, Leu-428–Gly-448, Val-468–Ile-488, and Phe-525–Met-545. 3 N-linked (GlcNAc...) asparagine glycosylation sites follow: Asn-630, Asn-653, and Asn-718. Residues Asn-630–His-808 form the STAS domain.

It belongs to the SLC26A/SulP transporter (TC 2.A.53) family.

Its subcellular location is the membrane. In terms of biological role, high affinity uptake of sulfate into the cell. This chain is Sulfate permease 1 (SUL1), found in Saccharomyces cerevisiae (strain ATCC 204508 / S288c) (Baker's yeast).